We begin with the raw amino-acid sequence, 103 residues long: Translation initiation factor 1A (103 aa).

Residues 11–86 form the S1-like domain; sequence TRVRTPRENE…EKCDVIWRYT (76 aa).

It belongs to the eIF-1A family.

Functionally, seems to be required for maximal rate of protein biosynthesis. Enhances ribosome dissociation into subunits and stabilizes the binding of the initiator Met-tRNA(I) to 40 S ribosomal subunits. The sequence is that of Translation initiation factor 1A (eIF1A) from Methanococcus maripaludis (strain C5 / ATCC BAA-1333).